A 507-amino-acid chain; its full sequence is Cytochrome P450 monooxygenase cloA (507 aa).

A helical transmembrane segment spans residues 15-35 (WTWILLTTCIALTSPLVLKGI). Asn247 carries an N-linked (GlcNAc...) asparagine glycan. Residue Cys450 coordinates heme.

The protein belongs to the cytochrome P450 family. Heme serves as cofactor.

It localises to the membrane. It participates in alkaloid biosynthesis; ergot alkaloid biosynthesis. Its function is as follows. Cytochrome P450 monooxygenase; part of the gene cluster that mediates the biosynthesis of fungal ergot alkaloid. DmaW catalyzes the first step of ergot alkaloid biosynthesis by condensing dimethylallyl diphosphate (DMAP) and tryptophan to form 4-dimethylallyl-L-tryptophan. The second step is catalyzed by the methyltransferase easF that methylates 4-dimethylallyl-L-tryptophan in the presence of S-adenosyl-L-methionine, resulting in the formation of 4-dimethylallyl-L-abrine. The catalase easC and the FAD-dependent oxidoreductase easE then transform 4-dimethylallyl-L-abrine to chanoclavine-I which is further oxidized by easD in the presence of NAD(+), resulting in the formation of chanoclavine-I aldehyde. Agroclavine dehydrogenase easG then mediates the conversion of chanoclavine-I aldehyde to agroclavine via a non-enzymatic adduct reaction: the substrate is an iminium intermediate that is formed spontaneously from chanoclavine-I aldehyde in the presence of glutathione. The presence of easA is not required to complete this reaction. Further conversion of agroclavine to paspalic acid is a two-step process involving oxidation of agroclavine to elymoclavine and of elymoclavine to paspalic acid, the second step being performed by the elymoclavine oxidase cloA. Paspalic acid is then further converted to D-lysergic acid. Ergopeptines are assembled from D-lysergic acid and three different amino acids by the D-lysergyl-peptide-synthetases composed each of a monomudular and a trimodular nonribosomal peptide synthetase subunit. LpsB and lpsC encode the monomodular subunits responsible for D-lysergic acid activation and incorporation into the ergopeptine backbone. LpsA1 and A2 subunits encode the trimodular nonribosomal peptide synthetase assembling the tripeptide portion of ergopeptines. LpsA1 is responsible for formation of the major ergopeptine, ergotamine, and lpsA2 for alpha-ergocryptine, the minor ergopeptine of the total alkaloid mixture elaborated by C.purpurea. D-lysergyl-tripeptides are assembled by the nonribosomal peptide synthetases and released as N-(D-lysergyl-aminoacyl)-lactams. Cyclolization of the D-lysergyl-tripeptides is performed by the Fe(2+)/2-ketoglutarate-dependent dioxygenase easH which introduces a hydroxyl group into N-(D-lysergyl-aminoacyl)-lactam at alpha-C of the aminoacyl residue followed by spontaneous condensation with the terminal lactam carbonyl group. This chain is Cytochrome P450 monooxygenase cloA, found in Claviceps purpurea (Ergot fungus).